Consider the following 456-residue polypeptide: tRNA modification GTPase MnmE (456 aa).

Residues Arg-24, Glu-81, and Lys-120 each contribute to the (6S)-5-formyl-5,6,7,8-tetrahydrofolate site. The 164-residue stretch at 216 to 379 (GMTVVIAGRP…LRDHLKACMG (164 aa)) folds into the TrmE-type G domain. Asn-226 contacts K(+). Residues 226-231 (NAGKSS), 245-251 (TDIAGTT), 270-273 (DTAG), and 335-338 (NKAD) each bind GTP. Ser-230 serves as a coordination point for Mg(2+). Thr-245, Ile-247, and Thr-250 together coordinate K(+). Thr-251 contributes to the Mg(2+) binding site. Lys-456 lines the (6S)-5-formyl-5,6,7,8-tetrahydrofolate pocket.

Belongs to the TRAFAC class TrmE-Era-EngA-EngB-Septin-like GTPase superfamily. TrmE GTPase family. As to quaternary structure, homodimer. Heterotetramer of two MnmE and two MnmG subunits. Requires K(+) as cofactor.

The protein resides in the cytoplasm. Its function is as follows. Exhibits a very high intrinsic GTPase hydrolysis rate. Involved in the addition of a carboxymethylaminomethyl (cmnm) group at the wobble position (U34) of certain tRNAs, forming tRNA-cmnm(5)s(2)U34. This chain is tRNA modification GTPase MnmE, found in Pseudomonas fluorescens (strain ATCC BAA-477 / NRRL B-23932 / Pf-5).